Consider the following 383-residue polypeptide: Protein phosphatase 2C homolog 4 (383 aa).

In terms of domain architecture, PPM-type phosphatase spans 51-356 (SLGLCTARGD…DDITCLVVRL (306 aa)). The Mn(2+) site is built by Asp92, Asp308, and Asp347.

The protein belongs to the PP2C family. Monomer. The cofactor is Mg(2+). Requires Mn(2+) as cofactor.

The protein resides in the vacuole membrane. It catalyses the reaction O-phospho-L-seryl-[protein] + H2O = L-seryl-[protein] + phosphate. It carries out the reaction O-phospho-L-threonyl-[protein] + H2O = L-threonyl-[protein] + phosphate. In terms of biological role, has a role in the regulation of vacuole fusion. This is Protein phosphatase 2C homolog 4 (ptc4) from Schizosaccharomyces pombe (strain 972 / ATCC 24843) (Fission yeast).